A 789-amino-acid chain; its full sequence is Homocitrate dehydratase, mitochondrial (789 aa).

A mitochondrion-targeting transit peptide spans 1 to 14 (MLSSANRFYIKRHL). Residues Q96 and 189-191 (DSH) contribute to the substrate site. C385, C448, and C451 together coordinate [4Fe-4S] cluster. Residues R476, R481, K610, and 672–673 (AR) contribute to the substrate site.

The protein belongs to the aconitase/IPM isomerase family. The cofactor is [4Fe-4S] cluster.

The protein localises to the mitochondrion. It catalyses the reaction (2R)-homocitrate = cis-homoaconitate + H2O. It functions in the pathway amino-acid biosynthesis; L-lysine biosynthesis via AAA pathway; L-alpha-aminoadipate from 2-oxoglutarate: step 2/5. Functionally, catalyzes the reversible dehydration of (R)-homocitrate to cis-homoaconitate, a step in the alpha-aminoadipate pathway for lysine biosynthesis. This chain is Homocitrate dehydratase, mitochondrial (ACO2), found in Saccharomyces cerevisiae (strain ATCC 204508 / S288c) (Baker's yeast).